A 386-amino-acid polypeptide reads, in one-letter code: Methylthioribose-1-phosphate isomerase (386 aa).

Residue D258 is the Proton donor of the active site.

Belongs to the eIF-2B alpha/beta/delta subunits family. MtnA subfamily.

It is found in the cytoplasm. The protein resides in the nucleus. The enzyme catalyses 5-(methylsulfanyl)-alpha-D-ribose 1-phosphate = 5-(methylsulfanyl)-D-ribulose 1-phosphate. The protein operates within amino-acid biosynthesis; L-methionine biosynthesis via salvage pathway; L-methionine from S-methyl-5-thio-alpha-D-ribose 1-phosphate: step 1/6. In terms of biological role, catalyzes the interconversion of methylthioribose-1-phosphate (MTR-1-P) into methylthioribulose-1-phosphate (MTRu-1-P). In Uncinocarpus reesii (strain UAMH 1704), this protein is Methylthioribose-1-phosphate isomerase.